A 1153-amino-acid chain; its full sequence is ATP-dependent helicase/deoxyribonuclease subunit B (1153 aa).

8 to 15 (GRAGSGKS) is a binding site for ATP. Residues Cys786, Cys1104, Cys1107, and Cys1113 each coordinate [4Fe-4S] cluster.

It belongs to the helicase family. AddB/RexB type 1 subfamily. In terms of assembly, heterodimer of AddA and AddB. Requires Mg(2+) as cofactor. It depends on [4Fe-4S] cluster as a cofactor.

In terms of biological role, the heterodimer acts as both an ATP-dependent DNA helicase and an ATP-dependent, dual-direction single-stranded exonuclease. Recognizes the chi site generating a DNA molecule suitable for the initiation of homologous recombination. The AddB subunit has 5' -&gt; 3' nuclease activity but not helicase activity. In Clostridium acetobutylicum (strain ATCC 824 / DSM 792 / JCM 1419 / IAM 19013 / LMG 5710 / NBRC 13948 / NRRL B-527 / VKM B-1787 / 2291 / W), this protein is ATP-dependent helicase/deoxyribonuclease subunit B.